A 515-amino-acid polypeptide reads, in one-letter code: Galactose/methyl galactoside import ATP-binding protein MglA (515 aa).

2 ABC transporter domains span residues 8 to 243 (LEMR…VGRE) and 254 to 499 (IPKE…AKYL). 40-47 (GENGAGKS) contributes to the ATP binding site.

Belongs to the ABC transporter superfamily. Galactose/methyl galactoside importer (TC 3.A.1.2.3) family. The complex is composed of one ATP-binding protein (MglA), two transmembrane proteins (MglC) and a solute-binding protein (MglB).

The protein resides in the cell membrane. The catalysed reaction is D-galactose(out) + ATP + H2O = D-galactose(in) + ADP + phosphate + H(+). The enzyme catalyses methyl beta-D-galactoside(out) + ATP + H2O = methyl beta-D-galactoside(in) + ADP + phosphate + H(+). In terms of biological role, part of the ABC transporter complex MglABC involved in galactose/methyl galactoside import. Responsible for energy coupling to the transport system. The protein is Galactose/methyl galactoside import ATP-binding protein MglA of Clostridium perfringens (strain SM101 / Type A).